We begin with the raw amino-acid sequence, 342 residues long: Serine/threonine-protein kinase ISR1 (342 aa).

One can recognise a Protein kinase domain in the interval 59 to 342 (WRLTRVLGCG…SNARVAEHAF (284 aa)). ATP contacts are provided by residues 65 to 73 (LGCGSVACV) and Lys84. The active-site Proton acceptor is Asp190.

It belongs to the protein kinase superfamily. Ser/Thr protein kinase family.

The catalysed reaction is L-seryl-[protein] + ATP = O-phospho-L-seryl-[protein] + ADP + H(+). It catalyses the reaction L-threonyl-[protein] + ATP = O-phospho-L-threonyl-[protein] + ADP + H(+). Its function is as follows. Probable serine/threonine protein kinase which may function redundantly with MPK1-independent branch of the PCK1 pathway. This Eremothecium gossypii (strain ATCC 10895 / CBS 109.51 / FGSC 9923 / NRRL Y-1056) (Yeast) protein is Serine/threonine-protein kinase ISR1 (ISR1).